The following is a 160-amino-acid chain: Cytochrome b6-f complex subunit 4 (160 aa).

3 helical membrane passes run 36-56, 95-115, and 131-151; these read LLYI…GLAV, LLGI…PFIE, and AFFL…CLPI.

It belongs to the cytochrome b family. PetD subfamily. As to quaternary structure, the 4 large subunits of the cytochrome b6-f complex are cytochrome b6, subunit IV (17 kDa polypeptide, PetD), cytochrome f and the Rieske protein, while the 4 small subunits are PetG, PetL, PetM and PetN. The complex functions as a dimer.

It is found in the cellular thylakoid membrane. Component of the cytochrome b6-f complex, which mediates electron transfer between photosystem II (PSII) and photosystem I (PSI), cyclic electron flow around PSI, and state transitions. The protein is Cytochrome b6-f complex subunit 4 of Prochlorococcus marinus (strain SARG / CCMP1375 / SS120).